We begin with the raw amino-acid sequence, 606 residues long: UvrABC system protein C (606 aa).

The region spanning 19 to 97 is the GIY-YIG domain; the sequence is QSCGVYQMIG…IKSLKPPYNI (79 aa). Residues 207–242 enclose the UVR domain; it reads EKVKKQLSSTMEKCSKEENYELAAIYRDRLKFLEQI.

The protein belongs to the UvrC family. Interacts with UvrB in an incision complex.

It is found in the cytoplasm. In terms of biological role, the UvrABC repair system catalyzes the recognition and processing of DNA lesions. UvrC both incises the 5' and 3' sides of the lesion. The N-terminal half is responsible for the 3' incision and the C-terminal half is responsible for the 5' incision. This is UvrABC system protein C from Wolbachia sp. subsp. Brugia malayi (strain TRS).